Reading from the N-terminus, the 638-residue chain is Epithelial sodium channel subunit beta (638 aa).

Topologically, residues 1 to 50 are cytoplasmic; sequence MPVKKYLLKCLHRLQKGPGYTYKELLVWYCNNTNTHGPKRIICEGPKKKA. The chain crosses the membrane as a helical span at residues 51-71; sequence MWFLLTLLFACLVCWQWGVFI. The Extracellular segment spans residues 72–530; the sequence is QTYLSWEVSV…GGQFGFWMGG (459 aa). Cystine bridges form between cysteine 98-cysteine 270, cysteine 182-cysteine 187, cysteine 194-cysteine 201, cysteine 247-cysteine 254, cysteine 359-cysteine 446, cysteine 384-cysteine 442, cysteine 388-cysteine 438, cysteine 397-cysteine 424, and cysteine 399-cysteine 413. Residues asparagine 135 and asparagine 141 are each glycosylated (N-linked (GlcNAc...) asparagine). A helical transmembrane segment spans residues 531–551; sequence SVLCLIEFGEIIIDFIWITVI. The Cytoplasmic segment spans residues 552 to 638; that stretch reads KLVASCKGLR…MESDSEVEAI (87 aa). Positions 598 to 620 are disordered; the sequence is NAEVYPDQQTLPIPGTPPPNYDS. The PY motif; recruits WW domain-containing proteins and is thereby required for ubiquitination and inhibition of the channel by NEDD4 and NEDD4L motif lies at 614 to 618; that stretch reads PPPNY. Serine 631 and serine 633 each carry phosphoserine.

It belongs to the amiloride-sensitive sodium channel (TC 1.A.6) family. SCNN1B subfamily. As to quaternary structure, component of the heterotrimeric epithelial sodium channel (ENaC) composed of an alpha/SCNN1A, a beta/SCNN1B and a gamma/SCNN1G subunit. Interacts with WWP1 (via WW domains). Interacts with WWP2 (via WW domains). Interacts with the full-length immature form of PCSK9 (pro-PCSK9). Interacts (N-glycosylated) with BPIFA1; the interaction is direct and inhibits the proteolytic processing of SCNN1A and SCNN1G and the activation of ENaC. In terms of processing, ubiquitinated. Can be ubiquitinated at multiple sites and undergo monoubiquitination and polyubiquitination. Ubiquitination by NEDD4 or NEDD4L inhibits the ENaC channel through endocytosis, intracellular retention and degradation of its individual subunits. However, some studies could not confirm the ubiquitination of this subunit of the ENaC. Post-translationally, N-glycosylated. N-glycosylation is required for interaction with BPIFA1. Phosphorylated on serine and threonine residues. Aldosterone and insulin increase the basal level of phosphorylation. In terms of tissue distribution, expressed in lung and epididymis. In the caput region of the epididymis, expressed at the luminal and basolateral surfaces of the ducts and in the smooth muscle coat. In the caudal region of the epididymis, expressed along the luminal border but not continuously, in the smooth muscle coat, in the interstitial muscle tissue and in sperm in the caudal lumen.

Its subcellular location is the apical cell membrane. It is found in the cytoplasmic vesicle membrane. It carries out the reaction Na(+)(in) = Na(+)(out). Originally identified and characterized by its inhibition by the diuretic drug amiloride. In terms of biological role, this is one of the three pore-forming subunits of the heterotrimeric epithelial sodium channel (ENaC), a critical regulator of sodium balance and fluid homeostasis. ENaC operates in epithelial tissues, where it mediates the electrodiffusion of sodium ions from extracellular fluid through the apical membrane of cells, with water following osmotically. It plays a key role in maintaining sodium homeostasis through electrogenic sodium reabsorption in the kidneys. This subunit is not essential for ENaC function in airway surface liquid homeostasis and proper mucus clearance. The polypeptide is Epithelial sodium channel subunit beta (Rattus norvegicus (Rat)).